The primary structure comprises 273 residues: Phosphatidylglycerol--prolipoprotein diacylglyceryl transferase (273 aa).

7 helical membrane passes run 21 to 41 (VSVR…LWLA), 60 to 80 (LLFA…VIFY), 95 to 115 (VWTG…AMFW), 124 to 144 (FFGV…MGRM), 176 to 196 (SQLY…NWFI), 203 to 223 (GAVS…VEFV), and 237 to 257 (ISMG…MMVW). Arginine 143 contacts a 1,2-diacyl-sn-glycero-3-phospho-(1'-sn-glycerol).

It belongs to the Lgt family.

Its subcellular location is the cell inner membrane. It catalyses the reaction L-cysteinyl-[prolipoprotein] + a 1,2-diacyl-sn-glycero-3-phospho-(1'-sn-glycerol) = an S-1,2-diacyl-sn-glyceryl-L-cysteinyl-[prolipoprotein] + sn-glycerol 1-phosphate + H(+). It functions in the pathway protein modification; lipoprotein biosynthesis (diacylglyceryl transfer). Functionally, catalyzes the transfer of the diacylglyceryl group from phosphatidylglycerol to the sulfhydryl group of the N-terminal cysteine of a prolipoprotein, the first step in the formation of mature lipoproteins. The polypeptide is Phosphatidylglycerol--prolipoprotein diacylglyceryl transferase (Vibrio campbellii (strain ATCC BAA-1116)).